The following is a 506-amino-acid chain: Histidine ammonia-lyase (506 aa).

The 5-imidazolinone (Ala-Gly) cross-link spans 143-145 (ASG). A 2,3-didehydroalanine (Ser) modification is found at serine 144.

This sequence belongs to the PAL/histidase family. Post-translationally, contains an active site 4-methylidene-imidazol-5-one (MIO), which is formed autocatalytically by cyclization and dehydration of residues Ala-Ser-Gly.

It localises to the cytoplasm. The enzyme catalyses L-histidine = trans-urocanate + NH4(+). Its pathway is amino-acid degradation; L-histidine degradation into L-glutamate; N-formimidoyl-L-glutamate from L-histidine: step 1/3. This chain is Histidine ammonia-lyase, found in Salmonella typhi.